Reading from the N-terminus, the 114-residue chain is PDZK1-interacting protein 1 (114 aa).

Topologically, residues 1 to 28 are extracellular; the sequence is MSALSLLILGLLTAVPPASCQQGLGNLQ. Residues 29–51 form a helical membrane-spanning segment; it reads PWMQGLIAVAVFLVLVAIAFAVN. Residues 52–114 lie on the Cytoplasmic side of the membrane; the sequence is HFWCQEEPEP…EEGKVRSTPM (63 aa). S85 is modified (phosphoserine). The interval 94-114 is disordered; that stretch reads EHENAYENVPEEEGKVRSTPM. Basic and acidic residues predominate over residues 105-114; that stretch reads EEGKVRSTPM.

It belongs to the PDZK1-interacting protein 1/SMIM24 family. As to quaternary structure, forms a heterodimer (via N-terminal transmembrane helix) with SLC5A2/SGLT2 (via TM13); this interaction enhances SLC5A2 transporter activity. Interacts with PDZK1.

The protein localises to the apical cell membrane. In terms of biological role, auxiliary protein of electrogenic Na(+)-coupled sugar symporter SLC5A2/SGLT2 and SLC5A1/SGLT1. Essential for the transporter activity of SLC5A2/SGLT2 but not SLC5A1/SGLT1. In Homo sapiens (Human), this protein is PDZK1-interacting protein 1.